Consider the following 581-residue polypeptide: Urease subunit alpha (581 aa).

In terms of domain architecture, Urease spans 134–581; it reads GGFDSHIHFI…LPMTQRYFLF (448 aa). Ni(2+) is bound by residues H139, H141, and K222. The residue at position 222 (K222) is an N6-carboxylysine. H224 is a substrate binding site. Positions 251 and 277 each coordinate Ni(2+). Residue H325 is the Proton donor of the active site. D365 is a binding site for Ni(2+).

Belongs to the metallo-dependent hydrolases superfamily. Urease alpha subunit family. As to quaternary structure, heterotrimer of UreA (gamma), UreB (beta) and UreC (alpha) subunits. Three heterotrimers associate to form the active enzyme. It depends on Ni cation as a cofactor. Carboxylation allows a single lysine to coordinate two nickel ions.

The protein resides in the cytoplasm. The enzyme catalyses urea + 2 H2O + H(+) = hydrogencarbonate + 2 NH4(+). It participates in nitrogen metabolism; urea degradation; CO(2) and NH(3) from urea (urease route): step 1/1. This chain is Urease subunit alpha, found in Albidiferax ferrireducens (strain ATCC BAA-621 / DSM 15236 / T118) (Rhodoferax ferrireducens).